A 124-amino-acid polypeptide reads, in one-letter code: Holo-[acyl-carrier-protein] synthase (124 aa).

Positions 8 and 56 each coordinate Mg(2+).

Belongs to the P-Pant transferase superfamily. AcpS family. Mg(2+) is required as a cofactor.

It is found in the cytoplasm. It catalyses the reaction apo-[ACP] + CoA = holo-[ACP] + adenosine 3',5'-bisphosphate + H(+). In terms of biological role, transfers the 4'-phosphopantetheine moiety from coenzyme A to a Ser of acyl-carrier-protein. This is Holo-[acyl-carrier-protein] synthase from Nitratidesulfovibrio vulgaris (strain DP4) (Desulfovibrio vulgaris).